The following is a 675-amino-acid chain: DNA ligase (675 aa).

NAD(+) contacts are provided by residues 33 to 37 (DAEYD), 82 to 83 (SL), and Glu114. The active-site N6-AMP-lysine intermediate is the Lys116. 4 residues coordinate NAD(+): Arg137, Glu174, Lys291, and Lys315. Cys409, Cys412, Cys427, and Cys433 together coordinate Zn(2+). The region spanning 595–675 (AGDNPFAGKT…EMIRLLDQSK (81 aa)) is the BRCT domain.

It belongs to the NAD-dependent DNA ligase family. LigA subfamily. The cofactor is Mg(2+). Mn(2+) serves as cofactor.

It carries out the reaction NAD(+) + (deoxyribonucleotide)n-3'-hydroxyl + 5'-phospho-(deoxyribonucleotide)m = (deoxyribonucleotide)n+m + AMP + beta-nicotinamide D-nucleotide.. Functionally, DNA ligase that catalyzes the formation of phosphodiester linkages between 5'-phosphoryl and 3'-hydroxyl groups in double-stranded DNA using NAD as a coenzyme and as the energy source for the reaction. It is essential for DNA replication and repair of damaged DNA. This is DNA ligase from Proteus mirabilis (strain HI4320).